Reading from the N-terminus, the 116-residue chain is Protein Rev (116 aa).

Ser-5 and Ser-8 each carry phosphoserine; by host CK2. Positions 18–26 (LIKFLYQSN) are homomultimerization. The segment at 23–48 (YQSNPPPNPEGTRQARRNRRRRWRER) is disordered. Positions 34-50 (TRQARRNRRRRWRERQR) match the Nuclear localization signal and RNA-binding (RRE) motif. A compositionally biased stretch (basic residues) spans 36–48 (QARRNRRRRWRER). Residues 73-84 (LQLPPLERLNLD) carry the Nuclear export signal and binding to XPO1 motif. The disordered stretch occupies residues 90 to 116 (GTSGTQGVGSPEILVESPAVLEPGTKE). Phosphoserine; by host occurs at positions 92 and 99.

It belongs to the HIV-1 REV protein family. In terms of assembly, homomultimer; when bound to the RRE. Multimeric assembly is essential for activity and may involve XPO1. Binds to human KPNB1, XPO1, TNPO1, RANBP5 and IPO7. Interacts with the viral Integrase. Interacts with human KHDRBS1. Interacts with human NAP1; this interaction decreases Rev multimerization and stimulates its activity. Interacts with human DEAD-box helicases DDX3 and DDX24; these interactions may serve for viral RNA export to the cytoplasm and packaging, respectively. Interacts with human PSIP1; this interaction may inhibit HIV-1 DNA integration by promoting dissociation of the Integrase-LEDGF/p75 complex. Asymmetrically arginine dimethylated at one site by host PRMT6. Methylation impairs the RNA-binding activity and export of viral RNA from the nucleus to the cytoplasm. Post-translationally, phosphorylated by protein kinase CK2. Presence of, and maybe binding to the N-terminus of the regulatory beta subunit of CK2 is necessary for CK2-mediated Rev's phosphorylation.

It is found in the host nucleus. The protein localises to the host nucleolus. Its subcellular location is the host cytoplasm. Its function is as follows. Escorts unspliced or incompletely spliced viral pre-mRNAs (late transcripts) out of the nucleus of infected cells. These pre-mRNAs carry a recognition sequence called Rev responsive element (RRE) located in the env gene, that is not present in fully spliced viral mRNAs (early transcripts). This function is essential since most viral proteins are translated from unspliced or partially spliced pre-mRNAs which cannot exit the nucleus by the pathway used by fully processed cellular mRNAs. Rev itself is translated from a fully spliced mRNA that readily exits the nucleus. Rev's nuclear localization signal (NLS) binds directly to KPNB1/Importin beta-1 without previous binding to KPNA1/Importin alpha-1. KPNB1 binds to the GDP bound form of RAN (Ran-GDP) and targets Rev to the nucleus. In the nucleus, the conversion from Ran-GDP to Ran-GTP dissociates Rev from KPNB1 and allows Rev's binding to the RRE in viral pre-mRNAs. Rev multimerization on the RRE via cooperative assembly exposes its nuclear export signal (NES) to the surface. Rev can then form a complex with XPO1/CRM1 and Ran-GTP, leading to nuclear export of the complex. Conversion from Ran-GTP to Ran-GDP mediates dissociation of the Rev/RRE/XPO1/RAN complex, so that Rev can return to the nucleus for a subsequent round of export. Beside KPNB1, also seems to interact with TNPO1/Transportin-1, RANBP5/IPO5 and IPO7/RANBP7 for nuclear import. The nucleoporin-like HRB/RIP is an essential cofactor that probably indirectly interacts with Rev to release HIV RNAs from the perinuclear region to the cytoplasm. The sequence is that of Protein Rev from Human immunodeficiency virus type 1 group M subtype B (isolate OYI) (HIV-1).